The primary structure comprises 484 residues: Mitochondrial metal transporter 2 (484 aa).

A mitochondrion-targeting transit peptide spans 1–56 (MLRISIDSIKQFGSFVPGYNNTSYHAAGRAIRTSSLYSTMISANPRRCLHSSKLLN). The span at 73-82 (SSQNGSNSRQ) shows a compositional bias: polar residues. The disordered stretch occupies residues 73-114 (SSQNGSNSRQNESEGKKEGKASSVKSLLQHTHSHSHTHMHDN). Residues 83–92 (NESEGKKEGK) show a composition bias toward basic and acidic residues. Transmembrane regions (helical) follow at residues 132–152 (ITWI…VGGI), 158–178 (ALLA…LTLF), 209–229 (ILAM…VGPV), 256–276 (ATNV…EWVF), and 316–336 (YFFN…GLII). The tract at residues 453–484 (DSKGDLEHSHDTKSTNHTHTHSDSADTHTHKH) is disordered.

This sequence belongs to the cation diffusion facilitator (CDF) transporter (TC 2.A.4) family. SLC30A subfamily.

It is found in the mitochondrion membrane. In terms of biological role, mitochondrial metal transporter involved in mitochondrial iron accumulation. The protein is Mitochondrial metal transporter 2 (MMT2) of Saccharomyces cerevisiae (strain ATCC 204508 / S288c) (Baker's yeast).